The primary structure comprises 201 residues: Oligoribonuclease (201 aa).

An Exonuclease domain is found at 20 to 183 (LVWLDMEMTG…ADIHESIDEL (164 aa)). The active site involves Y141.

This sequence belongs to the oligoribonuclease family.

It localises to the cytoplasm. 3'-to-5' exoribonuclease specific for small oligoribonucleotides. This Burkholderia mallei (strain NCTC 10229) protein is Oligoribonuclease.